Reading from the N-terminus, the 326-residue chain is GTP 3',8-cyclase (326 aa).

Positions 7-240 (AFARKFYYLR…AQVFHHSDYQ (234 aa)) constitute a Radical SAM core domain. Position 16 (Arg16) interacts with GTP. Positions 23 and 27 each coordinate [4Fe-4S] cluster. Residue Tyr29 coordinates S-adenosyl-L-methionine. Cys30 contacts [4Fe-4S] cluster. Residue Arg65 participates in GTP binding. Position 69 (Gly69) interacts with S-adenosyl-L-methionine. Residue Thr96 coordinates GTP. Ser120 lines the S-adenosyl-L-methionine pocket. Residue Lys157 participates in GTP binding. Met191 is a binding site for S-adenosyl-L-methionine. [4Fe-4S] cluster-binding residues include Cys254 and Cys257. A GTP-binding site is contributed by 259–261 (RLR). Cys271 contributes to the [4Fe-4S] cluster binding site.

It belongs to the radical SAM superfamily. MoaA family. Monomer and homodimer. It depends on [4Fe-4S] cluster as a cofactor.

It catalyses the reaction GTP + AH2 + S-adenosyl-L-methionine = (8S)-3',8-cyclo-7,8-dihydroguanosine 5'-triphosphate + 5'-deoxyadenosine + L-methionine + A + H(+). Its pathway is cofactor biosynthesis; molybdopterin biosynthesis. Functionally, catalyzes the cyclization of GTP to (8S)-3',8-cyclo-7,8-dihydroguanosine 5'-triphosphate. This Yersinia pestis protein is GTP 3',8-cyclase.